Consider the following 439-residue polypeptide: Xaa-Pro dipeptidase (439 aa).

Asp-244, Asp-255, His-335, Glu-380, and Glu-419 together coordinate Mn(2+).

This sequence belongs to the peptidase M24B family. Bacterial-type prolidase subfamily. Mn(2+) serves as cofactor.

It catalyses the reaction Xaa-L-Pro dipeptide + H2O = an L-alpha-amino acid + L-proline. Splits dipeptides with a prolyl residue in the C-terminal position. This Shewanella sp. (strain ANA-3) protein is Xaa-Pro dipeptidase.